Here is a 266-residue protein sequence, read N- to C-terminus: Dihydropteroate synthase (266 aa).

The Pterin-binding domain maps to 12 to 260 (AAIMGILNVT…DVKANQDIVA (249 aa)). Residue Asn19 participates in Mg(2+) binding. (7,8-dihydropterin-6-yl)methyl diphosphate contacts are provided by residues Thr59, Asp93, Asn112, Asp176, Lys212, and 248–250 (RVH).

This sequence belongs to the DHPS family. As to quaternary structure, homodimer or homotrimer. It depends on Mg(2+) as a cofactor.

It catalyses the reaction (7,8-dihydropterin-6-yl)methyl diphosphate + 4-aminobenzoate = 7,8-dihydropteroate + diphosphate. The protein operates within cofactor biosynthesis; tetrahydrofolate biosynthesis; 7,8-dihydrofolate from 2-amino-4-hydroxy-6-hydroxymethyl-7,8-dihydropteridine diphosphate and 4-aminobenzoate: step 1/2. Its function is as follows. Catalyzes the condensation of para-aminobenzoate (pABA) with 6-hydroxymethyl-7,8-dihydropterin diphosphate (DHPt-PP) to form 7,8-dihydropteroate (H2Pte), the immediate precursor of folate derivatives. This is Dihydropteroate synthase (folP) from Streptococcus pyogenes serotype M3 (strain ATCC BAA-595 / MGAS315).